The chain runs to 775 residues: Endothelin-converting enzyme-like 1 (775 aa).

The Cytoplasmic portion of the chain corresponds to 1–59 (MEPPYSLTAHYDEFQEVKYVSRCGAGGARGASLPPGFPLGAARSATGARSGLPRWNRRE). The helical; Signal-anchor for type II membrane protein transmembrane segment at 60-82 (VCLLSGLVFAAGLCAILAAMLAL) threads the bilayer. The Lumenal portion of the chain corresponds to 83-775 (KYLGPVAAGG…MNPAHKCSVW (693 aa)). In terms of domain architecture, Peptidase M13 spans 98–775 (GCPERKAFAR…MNPAHKCSVW (678 aa)). Disulfide bonds link C123–C760, C131–C720, C187–C441, and C649–C772. N255 and N322 each carry an N-linked (GlcNAc...) asparagine glycan. H612 lines the Zn(2+) pocket. E613 is an active-site residue. Position 616 (H616) interacts with Zn(2+). N-linked (GlcNAc...) asparagine glycosylation occurs at N656. E672 provides a ligand contact to Zn(2+). D676 serves as the catalytic Proton donor.

This sequence belongs to the peptidase M13 family. Zn(2+) is required as a cofactor. In terms of processing, N-glycosylated. As to expression, highly expressed in the CNS, in particular in putamen, spinal cord, medulla and subthalamic nucleus. A strong signal was also detected in uterine subepithelial cells and around renal blood vessels. Detected at lower levels in amygdala, caudate, thalamus, pancreas and skeletal muscle. Detected at very low levels in substantia nigra, cerebellum, cortex, corpus callosum and hippocampus.

It localises to the membrane. May contribute to the degradation of peptide hormones and be involved in the inactivation of neuronal peptides. The polypeptide is Endothelin-converting enzyme-like 1 (ECEL1) (Homo sapiens (Human)).